We begin with the raw amino-acid sequence, 495 residues long: Glucose-6-phosphate 1-dehydrogenase (495 aa).

Residue K51 forms an Isoglutamyl lysine isopeptide (Lys-Gln) (interchain with Q-Cter in protein Pup) linkage. Residues 94–95 (DL) and K154 contribute to the NADP(+) site. Substrate is bound by residues H184, K188, E222, and D241. H246 (proton acceptor) is an active-site residue. Substrate is bound at residue K345.

Belongs to the glucose-6-phosphate dehydrogenase family.

It carries out the reaction D-glucose 6-phosphate + NADP(+) = 6-phospho-D-glucono-1,5-lactone + NADPH + H(+). The protein operates within carbohydrate degradation; pentose phosphate pathway; D-ribulose 5-phosphate from D-glucose 6-phosphate (oxidative stage): step 1/3. Functionally, catalyzes the oxidation of glucose 6-phosphate to 6-phosphogluconolactone. This is Glucose-6-phosphate 1-dehydrogenase from Mycolicibacterium smegmatis (strain ATCC 700084 / mc(2)155) (Mycobacterium smegmatis).